The primary structure comprises 376 residues: Carbamoyl phosphate synthase small chain (376 aa).

The CPSase stretch occupies residues 1–187 (MKALLALEDG…KEDGSFLWKQ (187 aa)). L-glutamine is bound by residues S45, G239, and G241. The Glutamine amidotransferase type-1 domain occupies 189–376 (KIPLIVYDYG…KEVVLLKLGC (188 aa)). The active-site Nucleophile is the C266. L-glutamine contacts are provided by L267, Q270, N308, G310, and F311. Residues H349 and E351 contribute to the active site.

It belongs to the CarA family. In terms of assembly, composed of two chains; the small (or glutamine) chain promotes the hydrolysis of glutamine to ammonia, which is used by the large (or ammonia) chain to synthesize carbamoyl phosphate. Tetramer of heterodimers (alpha,beta)4.

The catalysed reaction is hydrogencarbonate + L-glutamine + 2 ATP + H2O = carbamoyl phosphate + L-glutamate + 2 ADP + phosphate + 2 H(+). It carries out the reaction L-glutamine + H2O = L-glutamate + NH4(+). It participates in amino-acid biosynthesis; L-arginine biosynthesis; carbamoyl phosphate from bicarbonate: step 1/1. Its pathway is pyrimidine metabolism; UMP biosynthesis via de novo pathway; (S)-dihydroorotate from bicarbonate: step 1/3. Its function is as follows. Small subunit of the glutamine-dependent carbamoyl phosphate synthetase (CPSase). CPSase catalyzes the formation of carbamoyl phosphate from the ammonia moiety of glutamine, carbonate, and phosphate donated by ATP, constituting the first step of 2 biosynthetic pathways, one leading to arginine and/or urea and the other to pyrimidine nucleotides. The small subunit (glutamine amidotransferase) binds and cleaves glutamine to supply the large subunit with the substrate ammonia. This Lawsonia intracellularis (strain PHE/MN1-00) protein is Carbamoyl phosphate synthase small chain.